The following is a 141-amino-acid chain: ATP synthase epsilon chain (141 aa).

It belongs to the ATPase epsilon chain family. As to quaternary structure, F-type ATPases have 2 components, CF(1) - the catalytic core - and CF(0) - the membrane proton channel. CF(1) has five subunits: alpha(3), beta(3), gamma(1), delta(1), epsilon(1). CF(0) has three main subunits: a, b and c.

Its subcellular location is the cell membrane. Its function is as follows. Produces ATP from ADP in the presence of a proton gradient across the membrane. This chain is ATP synthase epsilon chain, found in Lactococcus lactis subsp. lactis (strain IL1403) (Streptococcus lactis).